A 202-amino-acid polypeptide reads, in one-letter code: Holliday junction branch migration complex subunit RuvA (202 aa).

A domain I region spans residues Met1–Ala65. The tract at residues Thr66 to Leu144 is domain II. Residues Val145–Arg155 are flexible linker. The tract at residues Arg155–Arg202 is domain III.

The protein belongs to the RuvA family. Homotetramer. Forms an RuvA(8)-RuvB(12)-Holliday junction (HJ) complex. HJ DNA is sandwiched between 2 RuvA tetramers; dsDNA enters through RuvA and exits via RuvB. An RuvB hexamer assembles on each DNA strand where it exits the tetramer. Each RuvB hexamer is contacted by two RuvA subunits (via domain III) on 2 adjacent RuvB subunits; this complex drives branch migration. In the full resolvosome a probable DNA-RuvA(4)-RuvB(12)-RuvC(2) complex forms which resolves the HJ.

It is found in the cytoplasm. Functionally, the RuvA-RuvB-RuvC complex processes Holliday junction (HJ) DNA during genetic recombination and DNA repair, while the RuvA-RuvB complex plays an important role in the rescue of blocked DNA replication forks via replication fork reversal (RFR). RuvA specifically binds to HJ cruciform DNA, conferring on it an open structure. The RuvB hexamer acts as an ATP-dependent pump, pulling dsDNA into and through the RuvAB complex. HJ branch migration allows RuvC to scan DNA until it finds its consensus sequence, where it cleaves and resolves the cruciform DNA. The polypeptide is Holliday junction branch migration complex subunit RuvA (Nitratidesulfovibrio vulgaris (strain DP4) (Desulfovibrio vulgaris)).